We begin with the raw amino-acid sequence, 488 residues long: Glutamyl-tRNA(Gln) amidotransferase subunit A (488 aa).

Catalysis depends on charge relay system residues lysine 79 and serine 159. The active-site Acyl-ester intermediate is serine 183.

The protein belongs to the amidase family. GatA subfamily. As to quaternary structure, heterotrimer of A, B and C subunits.

It catalyses the reaction L-glutamyl-tRNA(Gln) + L-glutamine + ATP + H2O = L-glutaminyl-tRNA(Gln) + L-glutamate + ADP + phosphate + H(+). Its function is as follows. Allows the formation of correctly charged Gln-tRNA(Gln) through the transamidation of misacylated Glu-tRNA(Gln) in organisms which lack glutaminyl-tRNA synthetase. The reaction takes place in the presence of glutamine and ATP through an activated gamma-phospho-Glu-tRNA(Gln). This is Glutamyl-tRNA(Gln) amidotransferase subunit A from Wolbachia pipientis subsp. Culex pipiens (strain wPip).